Here is a 199-residue protein sequence, read N- to C-terminus: Superoxide dismutase [Mn/Fe] (199 aa).

The Fe(3+) site is built by histidine 27, histidine 81, aspartate 161, and histidine 165. Mn(2+) is bound by residues histidine 27, histidine 81, aspartate 161, and histidine 165.

It belongs to the iron/manganese superoxide dismutase family. As to quaternary structure, homodimer. Mn(2+) serves as cofactor. The cofactor is Fe(3+).

The catalysed reaction is 2 superoxide + 2 H(+) = H2O2 + O2. Its function is as follows. Destroys superoxide anion radicals which are normally produced within the cells and which are toxic to biological systems. Catalyzes the dismutation of superoxide anion radicals into O2 and H2O2 by successive reduction and oxidation of the transition metal ion at the active site. This is Superoxide dismutase [Mn/Fe] (sodA) from Staphylococcus epidermidis (strain ATCC 35984 / DSM 28319 / BCRC 17069 / CCUG 31568 / BM 3577 / RP62A).